Here is a 453-residue protein sequence, read N- to C-terminus: Serine/threonine-protein phosphatase 2A 55 kDa regulatory subunit B delta isoform (453 aa).

WD repeat units follow at residues 32–71 (AEAD…KGRA), 97–138 (EIEE…KRAE), 181–219 (AHTY…RSFN), and 230–270 (ELTE…LCDR). S285 is modified (phosphoserine). WD repeat units follow at residues 289-327 (EIIS…RPVE), 344-385 (ENDC…DVTL), and 420-452 (DFNK…QDKI). Phosphotyrosine is present on Y305. The residue at position 308 (T308) is a Phosphothreonine. Positions 385 to 406 (LEASRENSKPRASLKPRKVCSG) are disordered.

This sequence belongs to the phosphatase 2A regulatory subunit B family. As to quaternary structure, PP2A consists of a common heterodimeric core enzyme, composed of a 36 kDa catalytic subunit (subunit C) and a 65 kDa constant regulatory subunit (PR65 or subunit A), that associates with a variety of regulatory subunits. Proteins that associate with the core dimer include three families of regulatory subunits B (the R2/B/PR55/B55, R3/B''/PR72/PR130/PR59 and R5/B'/B56 families), the 48 kDa variable regulatory subunit, viral proteins, and cell signaling molecules. Interacts with ENSA (when phosphorylated at 'Ser-67') and ARPP19 (when phosphorylated at 'Ser-62'), leading to inhibit PP2A activity. Interacts with IER5. In terms of tissue distribution, widely expressed with high levels in brain, heart, placenta, skeletal muscle, testis, thymus and spleen.

The protein resides in the cytoplasm. Functionally, substrate-recognition subunit of protein phosphatase 2A (PP2A) that plays a key role in cell cycle by controlling mitosis entry and exit. Involved in chromosome clustering during late mitosis by mediating dephosphorylation of MKI67. The activity of PP2A complexes containing PPP2R2D (PR55-delta) fluctuate during the cell cycle: the activity is high in interphase and low in mitosis. The polypeptide is Serine/threonine-protein phosphatase 2A 55 kDa regulatory subunit B delta isoform (Ppp2r2d) (Rattus norvegicus (Rat)).